Consider the following 444-residue polypeptide: N-succinylarginine dihydrolase (444 aa).

Substrate-binding positions include 19 to 28, N110, and 137 to 138; these read AGLSFGNVAS and HR. Residue E174 is part of the active site. R214 is a substrate binding site. Residue H250 is part of the active site. Residues D252 and N362 each coordinate substrate. Residue C368 is the Nucleophile of the active site.

This sequence belongs to the succinylarginine dihydrolase family. As to quaternary structure, homodimer.

It catalyses the reaction N(2)-succinyl-L-arginine + 2 H2O + 2 H(+) = N(2)-succinyl-L-ornithine + 2 NH4(+) + CO2. The protein operates within amino-acid degradation; L-arginine degradation via AST pathway; L-glutamate and succinate from L-arginine: step 2/5. Catalyzes the hydrolysis of N(2)-succinylarginine into N(2)-succinylornithine, ammonia and CO(2). The protein is N-succinylarginine dihydrolase of Shewanella putrefaciens (strain CN-32 / ATCC BAA-453).